The chain runs to 180 residues: Ribulose bisphosphate carboxylase small subunit, chloroplastic 3 (180 aa).

A chloroplast-targeting transit peptide spans 1–56 (MASSVMSSAAVATRGNGAQASMVAPFTGLKSTASFPVSRKQNLDITSIASNGGRVS).

The protein belongs to the RuBisCO small chain family. Heterohexadecamer of 8 large and 8 small subunits. In terms of assembly, (Microbial infection) Binds to tobamovirus movement protein; this interaction seems required for viral systemic movement.

It is found in the plastid. Its subcellular location is the chloroplast. The protein localises to the cell junction. It localises to the plasmodesma. RuBisCO catalyzes two reactions: the carboxylation of D-ribulose 1,5-bisphosphate, the primary event in carbon dioxide fixation, as well as the oxidative fragmentation of the pentose substrate. Both reactions occur simultaneously and in competition at the same active site. Although the small subunit is not catalytic it is essential for maximal activity. Involved in antiviral defenses. The polypeptide is Ribulose bisphosphate carboxylase small subunit, chloroplastic 3 (Solanum lycopersicum (Tomato)).